The chain runs to 392 residues: Fasciculation and elongation protein zeta-1 (392 aa).

The tract at residues 1–36 is disordered; it reads MEAPLVSLDEEFEDIRPSCTEEPEEKPQCLYGTSPH. Residue serine 58 is modified to Phosphoserine. Residues 175 to 196 are disordered; it reads MQNSPDPEEEEEVLEEEDGGEI. Over residues 180–194 the composition is skewed to acidic residues; it reads DPEEEEEVLEEEDGG. Residues 230–298 are a coiled coil; it reads SELTELLDRV…KKRRKEKGLS (69 aa). 2 positions are modified to phosphoserine: serine 298 and serine 316.

It belongs to the zygin family. In terms of assembly, homodimer. Interacts with the NH2-terminal variable region (V1) of PKC zeta and weakly with that of PKC epsilon. Interacts with UBE4B and SAP30L. Interacts with SCOC and ULK1; SCOC interferes with ULK1-binding to FEZ1. Directly interacts with SCOC and UVRAG. Stabilizes the interaction between SCOC and UVRAG during amino acid starvation. Post-translationally, phosphorylated by protein kinase C zeta; which enhances interaction with UBE4B and polyubiquitination. In terms of processing, polyubiquitinated in a UBE4B-dependent manner; which does not lead to proteasomal degradation and may be important for neurogenic activity. Polyubiquitin linkage seems to be mainly through Lys-26.

It localises to the cytoplasm. It is found in the cytoskeleton. Its subcellular location is the microtubule organizing center. The protein localises to the centrosome. The protein resides in the cell membrane. Its function is as follows. May be involved in axonal outgrowth as component of the network of molecules that regulate cellular morphology and axon guidance machinery. May participate in the transport of mitochondria and other cargos along microtubules. The polypeptide is Fasciculation and elongation protein zeta-1 (Fez1) (Mus musculus (Mouse)).